A 40-amino-acid polypeptide reads, in one-letter code: Photosystem II reaction center protein J (40 aa).

The helical transmembrane segment at 8–28 (IPLWLIGTVTGIAVIGLIGVF) threads the bilayer.

It belongs to the PsbJ family. As to quaternary structure, PSII is composed of 1 copy each of membrane proteins PsbA, PsbB, PsbC, PsbD, PsbE, PsbF, PsbH, PsbI, PsbJ, PsbK, PsbL, PsbM, PsbT, PsbX, PsbY, PsbZ, Psb30/Ycf12, at least 3 peripheral proteins of the oxygen-evolving complex and a large number of cofactors. It forms dimeric complexes.

It localises to the plastid. Its subcellular location is the chloroplast thylakoid membrane. One of the components of the core complex of photosystem II (PSII). PSII is a light-driven water:plastoquinone oxidoreductase that uses light energy to abstract electrons from H(2)O, generating O(2) and a proton gradient subsequently used for ATP formation. It consists of a core antenna complex that captures photons, and an electron transfer chain that converts photonic excitation into a charge separation. The sequence is that of Photosystem II reaction center protein J from Oryza nivara (Indian wild rice).